The chain runs to 56 residues: Lantibiotic subtilin (56 aa).

Residues 1–24 (MSKFDDFDLDVVKVSKQDSKITPQ) constitute a propeptide that is removed on maturation. Residue Trp25 is modified to N2-succinyltryptophan; partial. The lanthionine (Ser-Cys) cross-link spans 27 to 31 (SESLC). Position 29 is a 2,3-didehydroalanine (Ser) (Ser29). 4 consecutive cross-links (beta-methyllanthionine (Thr-Cys)) follow at residues 32-35 (TPGC), 37-43 (TGALQTC), 47-50 (TLTC), and 49-52 (TCNC). Thr42 bears the (Z)-2,3-didehydrobutyrine mark. A 2,3-didehydroalanine (Ser) modification is found at Ser55.

The protein belongs to the type A lantibiotic family. In terms of processing, maturation of lantibiotics involves the enzymatic conversion of Thr, and Ser into dehydrated AA and the formation of thioether bonds with cysteine. This is followed by membrane translocation and cleavage of the modified precursor. Post-translationally, succinylated subtilin is 10-20 times less active than subtilin. The ratio subtilin/succinylated subtilin is about 1:2 after 24 hours growth. The 2,3-didehydrobutyrine is determined to be the Z-isomer.

Lanthionine-containing peptide antibiotic (lantibiotic) active on Gram-positive bacteria. The bactericidal activity of lantibiotics is based on depolarization of energized bacterial cytoplasmic membranes, initiated by the formation of aqueous transmembrane pores. This Bacillus subtilis protein is Lantibiotic subtilin (spaS).